A 120-amino-acid chain; its full sequence is Ribonuclease P protein component (120 aa).

The protein belongs to the RnpA family. Consists of a catalytic RNA component (M1 or rnpB) and a protein subunit.

It catalyses the reaction Endonucleolytic cleavage of RNA, removing 5'-extranucleotides from tRNA precursor.. Its function is as follows. RNaseP catalyzes the removal of the 5'-leader sequence from pre-tRNA to produce the mature 5'-terminus. It can also cleave other RNA substrates such as 4.5S RNA. The protein component plays an auxiliary but essential role in vivo by binding to the 5'-leader sequence and broadening the substrate specificity of the ribozyme. In Azoarcus sp. (strain BH72), this protein is Ribonuclease P protein component.